Here is a 383-residue protein sequence, read N- to C-terminus: Acetylornithine deacetylase (383 aa).

His80 lines the Zn(2+) pocket. Asp82 is an active-site residue. Asp112 is a binding site for Zn(2+). Glu144 is a catalytic residue. Zn(2+) is bound by residues Glu145, Glu169, and His355.

This sequence belongs to the peptidase M20A family. ArgE subfamily. Homodimer. Requires Zn(2+) as cofactor. It depends on Co(2+) as a cofactor. Glutathione is required as a cofactor.

Its subcellular location is the cytoplasm. It carries out the reaction N(2)-acetyl-L-ornithine + H2O = L-ornithine + acetate. It functions in the pathway amino-acid biosynthesis; L-arginine biosynthesis; L-ornithine from N(2)-acetyl-L-ornithine (linear): step 1/1. Functionally, catalyzes the hydrolysis of the amide bond of N(2)-acetylated L-amino acids. Cleaves the acetyl group from N-acetyl-L-ornithine to form L-ornithine, an intermediate in L-arginine biosynthesis pathway, and a branchpoint in the synthesis of polyamines. This is Acetylornithine deacetylase from Escherichia coli O139:H28 (strain E24377A / ETEC).